The primary structure comprises 301 residues: J domain-containing protein 1 (301 aa).

The J domain occupies 58 to 150 (TPYDIFGIPK…KKKIVYDTTR (93 aa)). The chain crosses the membrane as a helical span at residues 208–228 (WTVIGIICGLAICIEGTALLA).

The protein belongs to the DnaJ family.

Its subcellular location is the mitochondrion membrane. In terms of biological role, probable chaperone. This is J domain-containing protein 1 (JID1) from Saccharomyces cerevisiae (strain ATCC 204508 / S288c) (Baker's yeast).